Reading from the N-terminus, the 511-residue chain is Probable G-protein coupled receptor 152 (511 aa).

Residues 1–20 are disordered; the sequence is MDTAVEANLGAAGHGPRTEL. Residues 1 to 33 lie on the Extracellular side of the membrane; sequence MDTAVEANLGAAGHGPRTELSDEDYYPQGSWDT. The chain crosses the membrane as a helical span at residues 34–54; that stretch reads VFLVALLLLGLPANGLMAWLA. Topologically, residues 55 to 65 are cytoplasmic; sequence GSQARHGAGTR. Residues 66–86 traverse the membrane as a helical segment; that stretch reads LALLLLSLALSDFLFLAAATF. Topologically, residues 87–105 are extracellular; it reads QILEIQHGGHWPLGTAACR. Cys104 and Cys182 form a disulfide bridge. The helical transmembrane segment at 106–126 threads the bilayer; that stretch reads FYYFLWGVSYSSGLFLLTALS. The Cytoplasmic segment spans residues 127-148; it reads LDRCLLALCPRWYPGHRPARLP. The helical transmembrane segment at 149–169 threads the bilayer; it reads LWVCAGVWVLATLFSVPWLVF. Over 170 to 194 the chain is Extracellular; the sequence is PEAAVWWYDLVICLDFWDTEELPLR. A helical membrane pass occupies residues 195–215; the sequence is MLEILGGFLPFLLLLVCHVLT. The Cytoplasmic portion of the chain corresponds to 216 to 258; that stretch reads QATACRTCCGHQPRRMACHGFARVAKTILSAYVVLRLPYQLAQ. Residues 259–279 form a helical membrane-spanning segment; that stretch reads LLYLAFLWDVYPGYLLWEALV. Residues 280 to 282 are Extracellular-facing; the sequence is YSD. Residues 283-303 traverse the membrane as a helical segment; the sequence is YLILLNSCLSPFLCLAASADL. Topologically, residues 304-511 are cytoplasmic; sequence RALLRTVLSS…PEEAPSAGPT (208 aa). Disordered stretches follow at residues 328–349, 361–386, and 407–511; these read PAEP…DSVV, SDSV…PTVG, and PQLD…AGPT. Composition is skewed to polar residues over residues 335 to 345 and 369 to 386; these read PGPTSEGQSRL and VSPS…PTVG. The span at 419–433 shows a compositional bias: low complexity; sequence PSAQPQSKSVVQPQV. Polar residues-rich tracts occupy residues 435–453 and 462–473; these read PLTQ…NTET and SASNPGEENSSG.

It belongs to the G-protein coupled receptor 1 family.

It localises to the cell membrane. In terms of biological role, orphan receptor. This chain is Probable G-protein coupled receptor 152 (Gpr152), found in Mus musculus (Mouse).